A 374-amino-acid chain; its full sequence is Chaperone protein DnaJ (374 aa).

The J domain maps to 5 to 70 (DYYEVLGVER…SKRAAFDQYG (66 aa)). Residues 133–211 (GTTVSIRVPT…CHGEGRVEEY (79 aa)) form a CR-type zinc finger. Residues Cys146, Cys149, Cys163, Cys166, Cys185, Cys188, Cys199, and Cys202 each coordinate Zn(2+). CXXCXGXG motif repeat units follow at residues 146 to 153 (CQPCDGSG), 163 to 170 (CPTCGGIG), 185 to 192 (CPRCHGQG), and 199 to 206 (CTSCHGEG).

This sequence belongs to the DnaJ family. As to quaternary structure, homodimer. Requires Zn(2+) as cofactor.

The protein resides in the cytoplasm. Its function is as follows. Participates actively in the response to hyperosmotic and heat shock by preventing the aggregation of stress-denatured proteins and by disaggregating proteins, also in an autonomous, DnaK-independent fashion. Unfolded proteins bind initially to DnaJ; upon interaction with the DnaJ-bound protein, DnaK hydrolyzes its bound ATP, resulting in the formation of a stable complex. GrpE releases ADP from DnaK; ATP binding to DnaK triggers the release of the substrate protein, thus completing the reaction cycle. Several rounds of ATP-dependent interactions between DnaJ, DnaK and GrpE are required for fully efficient folding. Also involved, together with DnaK and GrpE, in the DNA replication of plasmids through activation of initiation proteins. In Pseudomonas putida (strain GB-1), this protein is Chaperone protein DnaJ.